Reading from the N-terminus, the 392-residue chain is Dual-specificity RNA methyltransferase RlmN (392 aa).

E116 serves as the catalytic Proton acceptor. A Radical SAM core domain is found at E122 to D364. Cysteines 129 and 369 form a disulfide. Residues C136, C140, and C143 each contribute to the [4Fe-4S] cluster site. S-adenosyl-L-methionine contacts are provided by residues G195–E196, S227, S249–H251, and N326. C369 (S-methylcysteine intermediate) is an active-site residue.

This sequence belongs to the radical SAM superfamily. RlmN family. [4Fe-4S] cluster serves as cofactor.

It is found in the cytoplasm. It catalyses the reaction adenosine(2503) in 23S rRNA + 2 reduced [2Fe-2S]-[ferredoxin] + 2 S-adenosyl-L-methionine = 2-methyladenosine(2503) in 23S rRNA + 5'-deoxyadenosine + L-methionine + 2 oxidized [2Fe-2S]-[ferredoxin] + S-adenosyl-L-homocysteine. The enzyme catalyses adenosine(37) in tRNA + 2 reduced [2Fe-2S]-[ferredoxin] + 2 S-adenosyl-L-methionine = 2-methyladenosine(37) in tRNA + 5'-deoxyadenosine + L-methionine + 2 oxidized [2Fe-2S]-[ferredoxin] + S-adenosyl-L-homocysteine. Functionally, specifically methylates position 2 of adenine 2503 in 23S rRNA and position 2 of adenine 37 in tRNAs. m2A2503 modification seems to play a crucial role in the proofreading step occurring at the peptidyl transferase center and thus would serve to optimize ribosomal fidelity. This is Dual-specificity RNA methyltransferase RlmN from Cereibacter sphaeroides (strain ATCC 17025 / ATH 2.4.3) (Rhodobacter sphaeroides).